A 147-amino-acid chain; its full sequence is Large ribosomal subunit protein bL9 (147 aa).

It belongs to the bacterial ribosomal protein bL9 family.

Its function is as follows. Binds to the 23S rRNA. This is Large ribosomal subunit protein bL9 from Cytophaga hutchinsonii (strain ATCC 33406 / DSM 1761 / CIP 103989 / NBRC 15051 / NCIMB 9469 / D465).